A 362-amino-acid chain; its full sequence is Phosphoserine aminotransferase (362 aa).

Residue R41 coordinates L-glutamate. Pyridoxal 5'-phosphate is bound by residues 75–76, F101, T152, D173, and Q196; that span reads GS. K197 carries the post-translational modification N6-(pyridoxal phosphate)lysine. 239-240 contacts pyridoxal 5'-phosphate; the sequence is NT.

Belongs to the class-V pyridoxal-phosphate-dependent aminotransferase family. SerC subfamily. Homodimer. Pyridoxal 5'-phosphate serves as cofactor.

The protein resides in the cytoplasm. The enzyme catalyses O-phospho-L-serine + 2-oxoglutarate = 3-phosphooxypyruvate + L-glutamate. It carries out the reaction 4-(phosphooxy)-L-threonine + 2-oxoglutarate = (R)-3-hydroxy-2-oxo-4-phosphooxybutanoate + L-glutamate. It participates in amino-acid biosynthesis; L-serine biosynthesis; L-serine from 3-phospho-D-glycerate: step 2/3. Functionally, catalyzes the reversible conversion of 3-phosphohydroxypyruvate to phosphoserine and of 3-hydroxy-2-oxo-4-phosphonooxybutanoate to phosphohydroxythreonine. In Leuconostoc mesenteroides subsp. mesenteroides (strain ATCC 8293 / DSM 20343 / BCRC 11652 / CCM 1803 / JCM 6124 / NCDO 523 / NBRC 100496 / NCIMB 8023 / NCTC 12954 / NRRL B-1118 / 37Y), this protein is Phosphoserine aminotransferase.